The primary structure comprises 295 residues: HTH-type transcriptional regulator TdfR (295 aa).

Residues 1–58 form the HTH lysR-type domain; sequence MEFRQLRYFVAAAEEGNVGAAARRLHISQPPVTRQIHALEQHLGVLLFERSARGVQLT. A DNA-binding region (H-T-H motif) is located at residues 18–37; it reads VGAAARRLHISQPPVTRQIH.

This sequence belongs to the LysR transcriptional regulatory family.

It is found in the cytoplasm. Functionally, involved in the regulation of 3-chlorocatechol degradation. Transcriptional regulator of tfdB expression. Acts as a repressor in the absence of its effector (either 2-cis-chlorodiene lactone or chloromaleylacetate) but acts as an activator when its effector is present. This chain is HTH-type transcriptional regulator TdfR (tfdR), found in Cupriavidus pinatubonensis (strain JMP 134 / LMG 1197) (Cupriavidus necator (strain JMP 134)).